Consider the following 299-residue polypeptide: tRNA dimethylallyltransferase (299 aa).

Residue 10–17 (GPTAVGKT) coordinates ATP. A substrate-binding site is contributed by 12-17 (TAVGKT). The tract at residues 35–38 (DSQQ) is interaction with substrate tRNA.

This sequence belongs to the IPP transferase family. Monomer. Mg(2+) is required as a cofactor.

The enzyme catalyses adenosine(37) in tRNA + dimethylallyl diphosphate = N(6)-dimethylallyladenosine(37) in tRNA + diphosphate. Catalyzes the transfer of a dimethylallyl group onto the adenine at position 37 in tRNAs that read codons beginning with uridine, leading to the formation of N6-(dimethylallyl)adenosine (i(6)A). This Streptococcus thermophilus (strain ATCC BAA-491 / LMD-9) protein is tRNA dimethylallyltransferase.